Here is a 224-residue protein sequence, read N- to C-terminus: UPF0758 protein PFL_6051 (224 aa).

An MPN domain is found at 102 to 224; the sequence is ALENPLVVRD…PLSMAEYGWI (123 aa). 3 residues coordinate Zn(2+): H173, H175, and D186. Residues 173-186 carry the JAMM motif motif; it reads HNHPSGICEPSPAD.

The protein belongs to the UPF0758 family.

In Pseudomonas fluorescens (strain ATCC BAA-477 / NRRL B-23932 / Pf-5), this protein is UPF0758 protein PFL_6051.